Consider the following 202-residue polypeptide: Glycoprotein U22 (202 aa).

Positions 1 to 20 (MVPQGCSLVWVSALYVSVIA) are cleaved as a signal peptide. N-linked (GlcNAc...) asparagine; by host glycosylation is found at Asn-54, Asn-107, Asn-112, and Asn-125. Residues 172-192 (FVYYCISVYLFAVVVLCSCWF) form a helical membrane-spanning segment.

It is found in the membrane. This Homo sapiens (Human) protein is Glycoprotein U22 (U22).